The chain runs to 100 residues: Small ribosomal subunit protein uS14 (100 aa).

This sequence belongs to the universal ribosomal protein uS14 family. Part of the 30S ribosomal subunit. Contacts proteins S3 and S10.

Its function is as follows. Binds 16S rRNA, required for the assembly of 30S particles and may also be responsible for determining the conformation of the 16S rRNA at the A site. This is Small ribosomal subunit protein uS14 from Picosynechococcus sp. (strain ATCC 27264 / PCC 7002 / PR-6) (Agmenellum quadruplicatum).